The following is a 408-amino-acid chain: Argininosuccinate synthase (408 aa).

Residues 10-18 and A37 each bind ATP; that span reads AYSGGLDTS. Positions 90 and 95 each coordinate L-citrulline. G120 serves as a coordination point for ATP. L-aspartate contacts are provided by T122, N126, and D127. N126 contributes to the L-citrulline binding site. Positions 130, 181, 190, 266, and 278 each coordinate L-citrulline.

This sequence belongs to the argininosuccinate synthase family. Type 1 subfamily. Homotetramer.

The protein resides in the cytoplasm. The enzyme catalyses L-citrulline + L-aspartate + ATP = 2-(N(omega)-L-arginino)succinate + AMP + diphosphate + H(+). It participates in amino-acid biosynthesis; L-arginine biosynthesis; L-arginine from L-ornithine and carbamoyl phosphate: step 2/3. This Cereibacter sphaeroides (strain ATCC 17029 / ATH 2.4.9) (Rhodobacter sphaeroides) protein is Argininosuccinate synthase.